Consider the following 163-residue polypeptide: Phosphopantetheine adenylyltransferase (163 aa).

A substrate-binding site is contributed by serine 9. Residues 9-10 (SF) and histidine 17 each bind ATP. Substrate is bound by residues lysine 41, threonine 73, and arginine 87. ATP-binding positions include 88–90 (GLR), glutamate 98, and 123–129 (YSFISSG).

This sequence belongs to the bacterial CoaD family. In terms of assembly, homohexamer. The cofactor is Mg(2+).

Its subcellular location is the cytoplasm. The enzyme catalyses (R)-4'-phosphopantetheine + ATP + H(+) = 3'-dephospho-CoA + diphosphate. Its pathway is cofactor biosynthesis; coenzyme A biosynthesis; CoA from (R)-pantothenate: step 4/5. In terms of biological role, reversibly transfers an adenylyl group from ATP to 4'-phosphopantetheine, yielding dephospho-CoA (dPCoA) and pyrophosphate. In Desulforudis audaxviator (strain MP104C), this protein is Phosphopantetheine adenylyltransferase.